The chain runs to 73 residues: Toxin Td7 (73 aa).

The first 7 residues, 1 to 7, serve as a signal peptide directing secretion; the sequence is IGMAVEC. The 63-residue stretch at 8–70 folds into the LCN-type CS-alpha/beta domain; it reads KDGYLVGADG…VWDSATNRCG (63 aa). Disulfide bonds link Cys18–Cys69, Cys22–Cys44, Cys30–Cys50, and Cys34–Cys52. Lys71 bears the Lysine amide mark.

It belongs to the long (4 C-C) scorpion toxin superfamily. Sodium channel inhibitor family. Beta subfamily. In terms of tissue distribution, expressed by the venom gland.

The protein localises to the secreted. Its function is as follows. Beta toxins bind voltage-independently at site-4 of sodium channels (Nav) and shift the voltage of activation toward more negative potentials thereby affecting sodium channel activation and promoting spontaneous and repetitive firing. The protein is Toxin Td7 of Tityus discrepans (Venezuelan scorpion).